We begin with the raw amino-acid sequence, 348 residues long: Malyl-CoA/beta-methylmalyl-CoA/citramalyl-CoA lyase (348 aa).

Substrate is bound by residues 32–33 (HF), K40, and R92. Positions 157 and 184 each coordinate Mg(2+). Substrate contacts are provided by residues 183 to 184 (AD) and L274.

It belongs to the HpcH/HpaI aldolase family. Homohexamer. Dimer of trimers. The cofactor is Mg(2+). Mn(2+) serves as cofactor.

The catalysed reaction is (S)-malyl-CoA = glyoxylate + acetyl-CoA. It carries out the reaction (2R,3S)-beta-methylmalyl-CoA = propanoyl-CoA + glyoxylate. It catalyses the reaction (3S)-citramalyl-CoA = pyruvate + acetyl-CoA. Its activity is regulated as follows. Inhibited by oxalate. In terms of biological role, involved in the 3-hydroxypropionate cycle used for autotrophic carbon dioxide fixation, and in the glyoxylate assimilation cycle used to regenerate acetyl-CoA and produce pyruvate as universal precursor for biosynthesis. As a part of the 3-hydroxypropionate cycle, it catalyzes the cleavage of (S)-malyl-CoA to yield acetyl-CoA and glyoxylate. As part of the glyoxylate assimilation cycle, it catalyzes the condensation of glyoxylate with propionyl-CoA to yield (2R,3S)-beta-methylmalyl-CoA, and catalyzes the cleavage of (S)-citramalyl-CoA to yield acetyl-CoA and pyruvate. This chain is Malyl-CoA/beta-methylmalyl-CoA/citramalyl-CoA lyase (mcl), found in Chloroflexus aurantiacus.